Reading from the N-terminus, the 158-residue chain is Phosphopantetheine adenylyltransferase (158 aa).

Serine 9 is a substrate binding site. Residues 9 to 10 and histidine 17 contribute to the ATP site; that span reads SF. Substrate contacts are provided by lysine 41, valine 73, and lysine 87. ATP contacts are provided by residues 88–90, glutamate 98, and 122–128; these read GLR and YSFVSSS.

Belongs to the bacterial CoaD family. As to quaternary structure, homohexamer. It depends on Mg(2+) as a cofactor.

The protein resides in the cytoplasm. The enzyme catalyses (R)-4'-phosphopantetheine + ATP + H(+) = 3'-dephospho-CoA + diphosphate. The protein operates within cofactor biosynthesis; coenzyme A biosynthesis; CoA from (R)-pantothenate: step 4/5. Functionally, reversibly transfers an adenylyl group from ATP to 4'-phosphopantetheine, yielding dephospho-CoA (dPCoA) and pyrophosphate. The chain is Phosphopantetheine adenylyltransferase from Mycobacterium sp. (strain JLS).